A 213-amino-acid polypeptide reads, in one-letter code: Large ribosomal subunit protein eL14 (213 aa).

Lysine 79 is modified (N6-acetyllysine). N6-acetyllysine; alternate is present on lysine 85. Lysine 85 is subject to N6-succinyllysine; alternate. Residue lysine 124 forms a Glycyl lysine isopeptide (Lys-Gly) (interchain with G-Cter in SUMO2) linkage. Serine 139 carries the phosphoserine modification. Residues 166–213 (TAGKKAPAQKAPAQKAAGQKAAPPPKAQKVQKPPAQKAPAPKASGEKA) form a disordered region. The 1-1; approximate repeat unit spans residues 169 to 173 (KKAPA). Residues 169–188 (KKAPAQKAPAQKAAGQKAAP) are 4 X 5 AA tandem repeats of Q-K-A-[APS]-X. A run of 5 repeats spans residues 174–178 (QKAPA), 179–183 (QKAAG), 184–188 (QKAAP), 191–193 (KAQ), and 194–196 (KVQ). Residues 191–196 (KAQKVQ) are 2 X 3 AA tandem repeats of K-G-Q. At lysine 202 the chain carries N6-succinyllysine.

This sequence belongs to the eukaryotic ribosomal protein eL14 family. As to quaternary structure, component of the large ribosomal subunit.

It localises to the cytoplasm. Component of the large ribosomal subunit. The ribosome is a large ribonucleoprotein complex responsible for the synthesis of proteins in the cell. The protein is Large ribosomal subunit protein eL14 (RPL14) of Sus scrofa (Pig).